The chain runs to 659 residues: tRNA-guanine(15) transglycosylase (659 aa).

The Nucleophile role is filled by Asp-84. The substrate site is built by Asp-119 and Ala-190. Zn(2+) contacts are provided by Cys-273, Cys-275, and Cys-278. The region spanning Lys-583–Lys-658 is the PUA domain.

Belongs to the archaeosine tRNA-ribosyltransferase family. Zn(2+) is required as a cofactor.

The enzyme catalyses guanosine(15) in tRNA + 7-cyano-7-deazaguanine = 7-cyano-7-carbaguanosine(15) in tRNA + guanine. The protein operates within tRNA modification; archaeosine-tRNA biosynthesis. Functionally, exchanges the guanine residue with 7-cyano-7-deazaguanine (preQ0) at position 15 in the dihydrouridine loop (D-loop) of archaeal tRNAs. In Methanobrevibacter smithii (strain ATCC 35061 / DSM 861 / OCM 144 / PS), this protein is tRNA-guanine(15) transglycosylase.